We begin with the raw amino-acid sequence, 401 residues long: 4-hydroxy-3-methylbut-2-enyl diphosphate reductase (401 aa).

Residue C66 coordinates [4Fe-4S] cluster. (2E)-4-hydroxy-3-methylbut-2-enyl diphosphate is bound at residue H96. H96 is a dimethylallyl diphosphate binding site. H96 provides a ligand contact to isopentenyl diphosphate. C157 provides a ligand contact to [4Fe-4S] cluster. A (2E)-4-hydroxy-3-methylbut-2-enyl diphosphate-binding site is contributed by H185. H185 contributes to the dimethylallyl diphosphate binding site. Isopentenyl diphosphate is bound at residue H185. Catalysis depends on E187, which acts as the Proton donor. Position 250 (T250) interacts with (2E)-4-hydroxy-3-methylbut-2-enyl diphosphate. C288 is a binding site for [4Fe-4S] cluster. S317, S318, N319, and S379 together coordinate (2E)-4-hydroxy-3-methylbut-2-enyl diphosphate. The dimethylallyl diphosphate site is built by S317, S318, N319, and S379. The isopentenyl diphosphate site is built by S317, S318, N319, and S379.

The protein belongs to the IspH family. [4Fe-4S] cluster is required as a cofactor.

It carries out the reaction isopentenyl diphosphate + 2 oxidized [2Fe-2S]-[ferredoxin] + H2O = (2E)-4-hydroxy-3-methylbut-2-enyl diphosphate + 2 reduced [2Fe-2S]-[ferredoxin] + 2 H(+). The enzyme catalyses dimethylallyl diphosphate + 2 oxidized [2Fe-2S]-[ferredoxin] + H2O = (2E)-4-hydroxy-3-methylbut-2-enyl diphosphate + 2 reduced [2Fe-2S]-[ferredoxin] + 2 H(+). Its pathway is isoprenoid biosynthesis; dimethylallyl diphosphate biosynthesis; dimethylallyl diphosphate from (2E)-4-hydroxy-3-methylbutenyl diphosphate: step 1/1. The protein operates within isoprenoid biosynthesis; isopentenyl diphosphate biosynthesis via DXP pathway; isopentenyl diphosphate from 1-deoxy-D-xylulose 5-phosphate: step 6/6. Functionally, catalyzes the conversion of 1-hydroxy-2-methyl-2-(E)-butenyl 4-diphosphate (HMBPP) into a mixture of isopentenyl diphosphate (IPP) and dimethylallyl diphosphate (DMAPP). Acts in the terminal step of the DOXP/MEP pathway for isoprenoid precursor biosynthesis. This Trichodesmium erythraeum (strain IMS101) protein is 4-hydroxy-3-methylbut-2-enyl diphosphate reductase.